The primary structure comprises 335 residues: MTLPLLGPMTLSGFAHSWFFLFIFVIAGLIAVYVVLQLARQKRMLRFANMELLESVAPQRPSRFRHIPAMLLALSLVLFTVAMAGPTHDVRIPRNRAVVMLVIDVSQSMRATDVEPNRMVAAQEAAKQFADELTPGINLGLIAYAGTATVLVSPTTNREATKAALDKLQFADRTATGEAIFTALQAIATVGAVIGGGDTPPPARIVLFSDGKETMPTNPDNPKGAYTAARTAKDQGVPISTISFGTPYGFVEINDQRQPVPVDDETMKKVAQLSGGNSYNAATLAELNSVYASLQQQIGYETIRGDASMGWLRLGALVLVAAALAALLINRRLPT.

A run of 2 helical transmembrane segments spans residues 18–38 (WFFL…VLQL) and 67–87 (IPAM…AGPT). One can recognise a VWFA domain in the interval 98–294 (VVMLVIDVSQ…AELNSVYASL (197 aa)). A helical membrane pass occupies residues 309–329 (MGWLRLGALVLVAAALAALLI).

The protein belongs to the UPF0353 family.

It is found in the cell membrane. The sequence is that of UPF0353 protein MMAR_2288 from Mycobacterium marinum (strain ATCC BAA-535 / M).